Here is a 287-residue protein sequence, read N- to C-terminus: MKRIFLLIATNLAVLLVASIVMSILGVNTSTMGGLLVFAAIFGFGGAFISLAISKWMAKKTMGCEVITTPRDSTERWLVETVARQAKQAGIKMPEVAIYQSSDMNAFATGPSKDNSLVAVSTGLLYGMSQDEIEGVLAHEVSHVANGDMVTLTLIQGVVNTFVIFAARVVAGIINNFVSSNDEEGEGLGMFAYMAVVFVLDMLFGILASIIVAYFSRIREYKADEGAARLAGKGKMIAALERLRQGPESTAMPAQMSAFGINGKRSMAEMMMSHPPLEKRIAALRAS.

2 consecutive transmembrane segments (helical) span residues 4 to 24 and 33 to 53; these read IFLL…VMSI and GGLL…SLAI. H139 contacts Zn(2+). Residue E140 is part of the active site. H143 provides a ligand contact to Zn(2+). The next 2 helical transmembrane spans lie at 154–174 and 195–215; these read LIQG…AGII and AVVF…VAYF. E220 lines the Zn(2+) pocket.

Belongs to the peptidase M48B family. Zn(2+) is required as a cofactor.

Its subcellular location is the cell inner membrane. This chain is Protease HtpX, found in Shewanella baltica (strain OS185).